We begin with the raw amino-acid sequence, 299 residues long: tRNA-cytidine(32) 2-sulfurtransferase (299 aa).

The short motif at 49–54 (SGGKDS) is the PP-loop motif element. [4Fe-4S] cluster is bound by residues C124, C127, and C215.

Belongs to the TtcA family. In terms of assembly, homodimer. Mg(2+) is required as a cofactor. Requires [4Fe-4S] cluster as cofactor.

It localises to the cytoplasm. The enzyme catalyses cytidine(32) in tRNA + S-sulfanyl-L-cysteinyl-[cysteine desulfurase] + AH2 + ATP = 2-thiocytidine(32) in tRNA + L-cysteinyl-[cysteine desulfurase] + A + AMP + diphosphate + H(+). Its pathway is tRNA modification. Catalyzes the ATP-dependent 2-thiolation of cytidine in position 32 of tRNA, to form 2-thiocytidine (s(2)C32). The sulfur atoms are provided by the cysteine/cysteine desulfurase (IscS) system. In Deinococcus radiodurans (strain ATCC 13939 / DSM 20539 / JCM 16871 / CCUG 27074 / LMG 4051 / NBRC 15346 / NCIMB 9279 / VKM B-1422 / R1), this protein is tRNA-cytidine(32) 2-sulfurtransferase.